A 129-amino-acid chain; its full sequence is Small ribosomal subunit protein uS11 (129 aa).

The protein belongs to the universal ribosomal protein uS11 family. In terms of assembly, part of the 30S ribosomal subunit. Interacts with proteins S7 and S18. Binds to IF-3.

In terms of biological role, located on the platform of the 30S subunit, it bridges several disparate RNA helices of the 16S rRNA. Forms part of the Shine-Dalgarno cleft in the 70S ribosome. The polypeptide is Small ribosomal subunit protein uS11 (Pectobacterium atrosepticum (strain SCRI 1043 / ATCC BAA-672) (Erwinia carotovora subsp. atroseptica)).